We begin with the raw amino-acid sequence, 496 residues long: Glycylpeptide N-tetradecanoyltransferase 1 (496 aa).

The tract at residues 1-82 is disordered; the sequence is MADESETAVK…SAQDQPVKMN (82 aa). Phosphoserine is present on residues S31 and S47. Positions 55-66 are enriched in basic residues; sequence KKKKKKQKKKKE. A Phosphoserine modification is found at S83. Positions 118, 119, 120, 247, 248, 249, 250, 256, 258, 259, and 260 each coordinate tetradecanoyl-CoA.

This sequence belongs to the NMT family. In terms of tissue distribution, heart, gut, kidney, liver and placenta.

It localises to the cytoplasm. The protein localises to the cytosol. It is found in the membrane. The catalysed reaction is N-terminal glycyl-[protein] + tetradecanoyl-CoA = N-tetradecanoylglycyl-[protein] + CoA + H(+). It catalyses the reaction N-terminal glycyl-L-lysyl-[protein] + tetradecanoyl-CoA = N-terminal glycyl-(N(6)-tetradecanoyl)-L-lysyl-[protein] + CoA + H(+). Functionally, adds a myristoyl group to the N-terminal glycine residue of certain cellular and viral proteins. Also able to mediate N-terminal lysine myristoylation of proteins: catalyzes myristoylation of ARF6 on both 'Gly-2' and 'Lys-3'. Lysine myristoylation is required to maintain ARF6 on membranes during the GTPase cycle. The protein is Glycylpeptide N-tetradecanoyltransferase 1 of Homo sapiens (Human).